The following is a 397-amino-acid chain: Subtilisin-like protease 3 (397 aa).

Positions 1 to 19 (MGCIKVISVFLAAIAAVDA) are cleaved as a signal peptide. A propeptide spanning residues 20–116 (RAFFHNRGGS…VEHDRVVKLA (97 aa)) is cleaved from the precursor. The Inhibitor I9 domain maps to 35 to 116 (SYIVVMKDGV…VEHDRVVKLA (82 aa)). The region spanning 126–397 (TWGLGRVSHR…NRLLYNGSGQ (272 aa)) is the Peptidase S8 domain. Catalysis depends on charge relay system residues Asp158 and His189. Asn250 carries N-linked (GlcNAc...) asparagine glycosylation. Residue Ser344 is the Charge relay system of the active site. A glycan (N-linked (GlcNAc...) asparagine) is linked at Asn393.

This sequence belongs to the peptidase S8 family.

Its subcellular location is the secreted. Secreted subtilisin-like serine protease with keratinolytic activity that contributes to pathogenicity. In Trichophyton equinum (Horse ringworm fungus), this protein is Subtilisin-like protease 3 (SUB3).